A 1170-amino-acid chain; its full sequence is Glucose transport transcription regulator RGT1 (1170 aa).

Polar residues predominate over residues 1 to 22 (MNELNTVSTNSSDSTKDGGTSN). Disordered regions lie at residues 1-47 (MNEL…SRAC) and 77-149 (SFDR…SNSV). The segment at residues 47-76 (CDQCRKKKIKCDYKDEKGVCSNCQRNGDRC) is a DNA-binding region (zn(2)-C6 fungal-type). Over residues 99 to 108 (RTNEIQDHNN) the composition is skewed to basic and acidic residues. Residues 113–138 (NTFDNSNNTLNNNTGNSGDNGINSNT) are compositionally biased toward low complexity. Positions 139–149 (VPSTPSRSNSV) are enriched in polar residues. Phosphoserine occurs at positions 202, 205, 208, and 229. 5 disordered regions span residues 226–254 (VQQSPITNKHTNDSGNANGSVTGSGSASG), 269–288 (APTDDHNGEQTRRSSSIPSL), 293–323 (SNSLLLGGQPQLPPPQQQSQPQAHQQKLQQG), 384–506 (AQQT…HPMT), and 944–977 (NYRPPNPPANNPTVQEGPSAMGSSPVAGNLSAAP). Over residues 239–250 (SGNANGSVTGSG) the composition is skewed to low complexity. Positions 271 to 280 (TDDHNGEQTR) are enriched in basic and acidic residues. Phosphoserine occurs at positions 283 and 284. Composition is skewed to low complexity over residues 293-302 (SNSLLLGGQP), 309-323 (QQSQPQAHQQKLQQG), and 385-397 (QQTQRPQGQQVPQ). Phosphoserine is present on residues Ser410 and Ser414. A compositionally biased stretch (polar residues) spans 411–422 (APVSVTLSTDRL). Residues 424-444 (GNENNNGEINNNNGSNNSGSS) are compositionally biased toward low complexity. The segment covering 445–457 (KDTSQHSQESVTT) has biased composition (polar residues). The span at 473-488 (STKKRRKSYVSKKTKP) shows a compositional bias: basic residues. Positions 493 to 506 (SISITSKDSAHPMT) are enriched in polar residues. Position 1130 is a phosphoserine (Ser1130).

Belongs to the EDS1/RGT1 family. Post-translationally, glucose-induced phosphorylation regulates the DNA-binding activity. Hyperphosphorylation in cells growing on high levels of glucose does prevents DNA-binding and dephosphorylation restores DNA-binding ability.

It is found in the nucleus. The protein localises to the cytoplasm. Glucose-responsive transcription factor that regulates expression of several glucose transporter (HXT) genes in response to glucose. In the absence of glucose, it functions as a transcriptional repressor, whereas high concentrations of glucose cause it to function as a transcriptional activator. In cells growing on low levels of glucose, has a neutral role, neither repressing nor activating transcription. Binds the consensus binding site sequence 5'-CGGANNA-3', of which multiple copies are present in all HXT promoters regulated by RGT1. The polypeptide is Glucose transport transcription regulator RGT1 (RGT1) (Saccharomyces cerevisiae (strain JAY291) (Baker's yeast)).